The sequence spans 203 residues: Putative 3-methyladenine DNA glycosylase (203 aa).

The protein belongs to the DNA glycosylase MPG family.

The polypeptide is Putative 3-methyladenine DNA glycosylase (Mycobacterium tuberculosis (strain ATCC 25177 / H37Ra)).